Consider the following 553-residue polypeptide: Sulfatase (553 aa).

The signal sequence occupies residues 1 to 25 (MTSEMKKFSKIVLFGLLISPLLASS). Ca(2+) is bound by residues aspartate 43, aspartate 44, and cysteine 88. Residue cysteine 88 is the Nucleophile of the active site. Cysteine 88 is modified (3-oxoalanine (Cys)). The active site involves histidine 159. Ca(2+) is bound by residues aspartate 350 and asparagine 351.

It belongs to the sulfatase family. Requires Ca(2+) as cofactor. The conversion to 3-oxoalanine (also known as C-formylglycine, FGly), of a serine or cysteine residue in prokaryotes and of a cysteine residue in eukaryotes, is critical for catalytic activity. This post-translational modification is severely defective in multiple sulfatase deficiency (MSD).

It localises to the secreted. Its function is as follows. Sulfatase that may be involved in ulvan degradation. Ulvan is the main polysaccharide component of the Ulvales (green seaweed) cell wall. It is composed of disaccharide building blocks comprising 3-sulfated rhamnose (Rha3S) linked to D-glucuronic acid (GlcA), L-iduronic acid (IduA), or D-xylose (Xyl). The chain is Sulfatase from Formosa agariphila (strain DSM 15362 / KCTC 12365 / LMG 23005 / KMM 3901 / M-2Alg 35-1).